A 183-amino-acid polypeptide reads, in one-letter code: Ribosome-recycling factor (183 aa).

It belongs to the RRF family.

It localises to the cytoplasm. Its function is as follows. Responsible for the release of ribosomes from messenger RNA at the termination of protein biosynthesis. May increase the efficiency of translation by recycling ribosomes from one round of translation to another. The protein is Ribosome-recycling factor of Bifidobacterium longum subsp. infantis (strain ATCC 15697 / DSM 20088 / JCM 1222 / NCTC 11817 / S12).